The chain runs to 493 residues: Farnesoate epoxidase (493 aa).

A signal peptide spans M1–C24. Heme is bound at residue C433.

The protein belongs to the cytochrome P450 family. The cofactor is heme. Constitutively expressed in corpora allata from the first instar larval to adult stages.

It carries out the reaction (2E,6E)-farnesoate + reduced [NADPH--hemoprotein reductase] + O2 = juvenile hormone III carboxylate + oxidized [NADPH--hemoprotein reductase] + H2O + H(+). Its function is as follows. Catalyzes the conversion of farnesoate to juvenile hormone III acid in juvenile hormone biosynthesis. The polypeptide is Farnesoate epoxidase (Bombyx mori (Silk moth)).